The chain runs to 101 residues: Urease subunit gamma (101 aa).

It belongs to the urease gamma subunit family. As to quaternary structure, heterotrimer of UreA (gamma), UreB (beta) and UreC (alpha) subunits. Three heterotrimers associate to form the active enzyme.

The protein resides in the cytoplasm. It catalyses the reaction urea + 2 H2O + H(+) = hydrogencarbonate + 2 NH4(+). Its pathway is nitrogen metabolism; urea degradation; CO(2) and NH(3) from urea (urease route): step 1/1. This is Urease subunit gamma from Ureaplasma urealyticum (Ureaplasma urealyticum biotype 2).